Consider the following 259-residue polypeptide: Uridylate kinase (259 aa).

K10–G13 contributes to the ATP binding site. Residue G52 participates in UMP binding. ATP is bound by residues G53 and R57. UMP-binding positions include D72 and N134–T141. Residues Y168 and D171 each coordinate ATP. Positions I236–A259 are disordered.

The protein belongs to the UMP kinase family. Homohexamer.

The protein localises to the cytoplasm. The enzyme catalyses UMP + ATP = UDP + ADP. It functions in the pathway pyrimidine metabolism; CTP biosynthesis via de novo pathway; UDP from UMP (UMPK route): step 1/1. With respect to regulation, inhibited by UTP. Catalyzes the reversible phosphorylation of UMP to UDP. In Frankia casuarinae (strain DSM 45818 / CECT 9043 / HFP020203 / CcI3), this protein is Uridylate kinase.